Reading from the N-terminus, the 228-residue chain is Large ribosomal subunit protein uL16 (228 aa).

The protein belongs to the universal ribosomal protein uL16 family. In terms of assembly, component of the small ribosomal subunit. Mature ribosomes consist of a small (40S) and a large (60S) subunit. The 40S subunit contains about 33 different proteins and 1 molecule of RNA (18S). The 60S subunit contains about 49 different proteins and 3 molecules of RNA (25S, 5.8S and 5S).

The sequence is that of Large ribosomal subunit protein uL16 (RPL10) from Pinus taeda (Loblolly pine).